The primary structure comprises 336 residues: Dihydroorotate dehydrogenase (quinone) (336 aa).

FMN is bound by residues 62–66 and Thr-86; that span reads AGLDK. A substrate-binding site is contributed by Lys-66. 111-115 is a binding site for substrate; the sequence is NRMGF. 2 residues coordinate FMN: Asn-139 and Asn-172. Asn-172 contacts substrate. Ser-175 functions as the Nucleophile in the catalytic mechanism. Asn-177 contacts substrate. The FMN site is built by Lys-217 and Thr-245. 246-247 contacts substrate; it reads NT. Residues Gly-268, Gly-297, and 318–319 contribute to the FMN site; that span reads YS.

It belongs to the dihydroorotate dehydrogenase family. Type 2 subfamily. In terms of assembly, monomer. It depends on FMN as a cofactor.

It localises to the cell membrane. It catalyses the reaction (S)-dihydroorotate + a quinone = orotate + a quinol. The protein operates within pyrimidine metabolism; UMP biosynthesis via de novo pathway; orotate from (S)-dihydroorotate (quinone route): step 1/1. Its function is as follows. Catalyzes the conversion of dihydroorotate to orotate with quinone as electron acceptor. This chain is Dihydroorotate dehydrogenase (quinone), found in Salmonella choleraesuis (strain SC-B67).